The following is a 511-amino-acid chain: Glycoprotein (511 aa).

The N-terminal stretch at 1–16 is a signal peptide; it reads MKCLLYLAFLFIGVNC. Residues 17–467 are Virion surface-facing; that stretch reads KFTIVFPHNQ…FSSWKSSIAS (451 aa). Residues 18-35 form a trimerization region; it reads FTIVFPHNQKGNWKNVPS. 6 cysteine pairs are disulfide-bonded: Cys-40/Cys-300, Cys-75/Cys-108, Cys-84/Cys-130, Cys-169/Cys-174, Cys-193/Cys-240, and Cys-235/Cys-269. Positions 53–172 are fusion peptide; it reads IGTALQVKMP…QFINGKCSND (120 aa). Asn-179 carries N-linked (GlcNAc...) asparagine; by host glycosylation. Residues 259-309 are trimerization; the sequence is DLFAAARFPECPEGSSISAPSQTSVDVSLIQDVERILDYSLCQETWSKIRA. N-linked (GlcNAc...) asparagine; by host glycosylation occurs at Asn-336. The trimerization stretch occupies residues 383 to 405; the sequence is EIGPNGVLRTSLGYKFPLYMIGH. The helical transmembrane segment at 468 to 488 threads the bilayer; sequence FFFIIGLIIGLFLVLRVGIYL. Residue Cys-489 is the site of S-palmitoyl cysteine; by host attachment. Residues 489-511 are Intravirion-facing; it reads CIKLKHTKKRQIYTDIEMNRLGK. Positions 496–506 match the basolateral targeting ex vivo motif; it reads KKRQIYTDIEM.

It belongs to the vesiculovirus glycoprotein family. As to quaternary structure, homotrimer. Interacts with host LDL at target cell surface. Glycosylated by host. Palmitoylated by host.

The protein resides in the virion membrane. It is found in the host membrane. Functionally, attaches the virus to host LDL receptors, inducing clathrin-dependent endocytosis of the virion. In the endosome, the acidic pH induces conformational changes in the glycoprotein trimer, which trigger fusion between virus and endosomal membrane. The protein is Glycoprotein (G) of Vesicular stomatitis Indiana virus (strain Orsay) (VSIV).